The sequence spans 414 residues: Esterase FrsA (414 aa).

The protein belongs to the FrsA family.

It carries out the reaction a carboxylic ester + H2O = an alcohol + a carboxylate + H(+). Catalyzes the hydrolysis of esters. The chain is Esterase FrsA from Salmonella agona (strain SL483).